Here is a 157-residue protein sequence, read N- to C-terminus: 2-C-methyl-D-erythritol 2,4-cyclodiphosphate synthase (157 aa).

Residues aspartate 8 and histidine 10 each contribute to the a divalent metal cation site. 4-CDP-2-C-methyl-D-erythritol 2-phosphate-binding positions include 8 to 10 and 34 to 35; these read DVH and HS. Residue histidine 42 participates in a divalent metal cation binding. 4-CDP-2-C-methyl-D-erythritol 2-phosphate is bound by residues 56–58, 61–65, 100–106, 132–135, phenylalanine 139, and arginine 142; these read DIG, FPDTD, AQAPKMA, and TTTE.

This sequence belongs to the IspF family. Homotrimer. A divalent metal cation serves as cofactor.

The enzyme catalyses 4-CDP-2-C-methyl-D-erythritol 2-phosphate = 2-C-methyl-D-erythritol 2,4-cyclic diphosphate + CMP. The protein operates within isoprenoid biosynthesis; isopentenyl diphosphate biosynthesis via DXP pathway; isopentenyl diphosphate from 1-deoxy-D-xylulose 5-phosphate: step 4/6. Its function is as follows. Involved in the biosynthesis of isopentenyl diphosphate (IPP) and dimethylallyl diphosphate (DMAPP), two major building blocks of isoprenoid compounds. Catalyzes the conversion of 4-diphosphocytidyl-2-C-methyl-D-erythritol 2-phosphate (CDP-ME2P) to 2-C-methyl-D-erythritol 2,4-cyclodiphosphate (ME-CPP) with a corresponding release of cytidine 5-monophosphate (CMP). The chain is 2-C-methyl-D-erythritol 2,4-cyclodiphosphate synthase from Pseudomonas putida (strain ATCC 700007 / DSM 6899 / JCM 31910 / BCRC 17059 / LMG 24140 / F1).